Reading from the N-terminus, the 383-residue chain is S-adenosylmethionine synthase (383 aa).

ATP is bound at residue His15. Asp17 provides a ligand contact to Mg(2+). Glu43 is a binding site for K(+). Residues Glu56 and Gln99 each contribute to the L-methionine site. The tract at residues 99 to 109 (QSPDINQGVDR) is flexible loop. ATP contacts are provided by residues 164–166 (DAK), 230–231 (RF), Asp239, 245–246 (RK), Ala262, and Lys266. Asp239 is an L-methionine binding site. Lys270 is a binding site for L-methionine.

The protein belongs to the AdoMet synthase family. Homotetramer; dimer of dimers. The cofactor is Mg(2+). Requires K(+) as cofactor.

It localises to the cytoplasm. It catalyses the reaction L-methionine + ATP + H2O = S-adenosyl-L-methionine + phosphate + diphosphate. Its pathway is amino-acid biosynthesis; S-adenosyl-L-methionine biosynthesis; S-adenosyl-L-methionine from L-methionine: step 1/1. Its function is as follows. Catalyzes the formation of S-adenosylmethionine (AdoMet) from methionine and ATP. The overall synthetic reaction is composed of two sequential steps, AdoMet formation and the subsequent tripolyphosphate hydrolysis which occurs prior to release of AdoMet from the enzyme. This chain is S-adenosylmethionine synthase, found in Shewanella amazonensis (strain ATCC BAA-1098 / SB2B).